The following is a 221-amino-acid chain: Protein GrpE (221 aa).

The segment at M1–D83 is disordered. Positions Q23–G32 are enriched in basic and acidic residues. Residues E41–E53 show a composition bias toward low complexity.

This sequence belongs to the GrpE family. As to quaternary structure, homodimer.

It localises to the cytoplasm. Its function is as follows. Participates actively in the response to hyperosmotic and heat shock by preventing the aggregation of stress-denatured proteins, in association with DnaK and GrpE. It is the nucleotide exchange factor for DnaK and may function as a thermosensor. Unfolded proteins bind initially to DnaJ; upon interaction with the DnaJ-bound protein, DnaK hydrolyzes its bound ATP, resulting in the formation of a stable complex. GrpE releases ADP from DnaK; ATP binding to DnaK triggers the release of the substrate protein, thus completing the reaction cycle. Several rounds of ATP-dependent interactions between DnaJ, DnaK and GrpE are required for fully efficient folding. In Geobacillus stearothermophilus (Bacillus stearothermophilus), this protein is Protein GrpE.